Reading from the N-terminus, the 513-residue chain is MQLSPSEISGLIKQRIEKFDNSVELKSEGTIVSVADGIVTIYGLNDVAAGEMIKLPGDVYGLALNLNTDSVGAVVLGDYEHIKEGDKAYCTGRILEVPVGEALLGRVVDALGNPIDGKGEVATDLTSPIEKIAPGVIWRKSVDQALQTGIKSIDSMVPIGRGQRELIIGDRQIGKTAIAVDTIINQKGTGVKCIYVAIGQKASTIANIVRQLEEHGAMEHTIIVAATASDSAALQYIAPYAGCSMGEYFRDRGQDALIVYDDLTKQAWAYRQISLLLRRPPGREAYPGDVFYLHSRLLERAARVNEEYVEKFTNGEVKGKTGSLTALPIIETQAGDISAFVPTNVISITDGQIFLETDLFNSGLRPAINPGNSVSRVGGAAQTKIIKKLGGGIRLALAQYRELEAFSQFASDLDEATRAQLNRGQRVTELLKQKQFSTLSVALMALSLYAADNGYLDNLEVSEVIPFESALHALAETKYSDVIAEINETGKYDADIADKLKIIVEDCKANQAW.

Glycine 169–threonine 176 is a binding site for ATP.

The protein belongs to the ATPase alpha/beta chains family. In terms of assembly, F-type ATPases have 2 components, CF(1) - the catalytic core - and CF(0) - the membrane proton channel. CF(1) has five subunits: alpha(3), beta(3), gamma(1), delta(1), epsilon(1). CF(0) has three main subunits: a(1), b(2) and c(9-12). The alpha and beta chains form an alternating ring which encloses part of the gamma chain. CF(1) is attached to CF(0) by a central stalk formed by the gamma and epsilon chains, while a peripheral stalk is formed by the delta and b chains.

It is found in the cell inner membrane. The enzyme catalyses ATP + H2O + 4 H(+)(in) = ADP + phosphate + 5 H(+)(out). In terms of biological role, produces ATP from ADP in the presence of a proton gradient across the membrane. The alpha chain is a regulatory subunit. The polypeptide is ATP synthase subunit alpha (Francisella tularensis subsp. novicida (strain U112)).